A 505-amino-acid chain; its full sequence is MFS-type transporter oryN (505 aa).

The disordered stretch occupies residues 1 to 54; that stretch reads MAVAELPNIVSTDSSPSPHPGSRLSSEPTDIESQKAPSNAEPKTDPNLVTWDGP. The next 13 membrane-spanning stretches (helical) occupy residues 69-89, 106-126, 135-155, 166-186, 193-213, 226-246, 280-300, 301-321, 337-357, 376-396, 401-421, 440-460, and 468-488; these read AFVTAIWVYGNLCTCIASSIF, VVTLGISLFLLGYTVGPPVWG, KWPMVIGMALFTIFCIPVAVA, FLTGVFGAAPLSLVGGSLVDM, GVAMACCIGTIFGSPVLAPLM, FTQWLSCIMGGSCTVLVVFGL, GIKDIFVIFLLRPFALLVTEP, ILLLVTIYQAFIYGILYLVFV, ISALPYIGMMVGILIGCAIVV, LPLMIAGGCLLPVGLFIFAWT, IHWAGMVIGSAPVGTGMYMVF, IGANTFVRSFFGAGFPLFGPF, and AWASSTLGFISIAMIPIPVLF.

This sequence belongs to the major facilitator superfamily. CAR1 family.

The protein localises to the membrane. Its function is as follows. MFS-type transporter; part of the gene cluster that mediates the biosynthesis of oryzines, natural products with an unusual maleidride backbone. This Aspergillus oryzae (strain ATCC 42149 / RIB 40) (Yellow koji mold) protein is MFS-type transporter oryN.